The chain runs to 517 residues: MDIVGGQNLRQMWDDLAGVYGDKTALIFESCEGIVRQFSYASLNEEINRTANLFYSLGIRKGDRVALHLDNCPEFIFCWFGLAKIGAIMVPINARLLGEESAWILQNSQVSLLVTSAQFYPMYREIRQDNSTPLNHICLIGEQLPADDGVSHFTQLQARQSATLCYTPVLSTDDTAEILFTSGTTSRPKGVVITHYNLRFAGYYSAWQIALRDDDVYMTVMPAFHIDCQCTAAMPAFSAGSTFVLLEKYSARAFWDQVRKYQATVTECIPMMIRTLMVQPAAPTDRQHHLREVMFYLNLSEQEKDDFTERFGVRLLTSYGMTETIVGIIGDRPGDKRRWPSIGRVGFSYEAEIRDDQNRPLPAGEIGEICIKGIPGKTIFKEYYMQPEATAKALEPEGWLHTGDSGYQDEDGYFYFVDRRCNMIKRGGENVSCVELENIISAHPKIQDIVVVGIKDAIRDEAIKAFIVLNEGETLSEAEFFSFCENNMAKFKVPSFMEIRTDLPRNCSGKIIKKNLK.

Belongs to the ATP-dependent AMP-binding enzyme family.

It catalyses the reaction 4-(trimethylamino)butanoate + ATP + CoA = 4-(trimethylamino)butanoyl-CoA + AMP + diphosphate. The enzyme catalyses crotonobetaine + ATP + CoA = crotonobetainyl-CoA + AMP + diphosphate. It carries out the reaction (R)-carnitine + ATP + CoA = (R)-carnitinyl-CoA + AMP + diphosphate. It participates in amine and polyamine metabolism; carnitine metabolism. Catalyzes the transfer of CoA to carnitine, generating the initial carnitinyl-CoA needed for the CaiB reaction cycle. Also has activity toward crotonobetaine and gamma-butyrobetaine. This chain is Crotonobetaine/carnitine--CoA ligase, found in Salmonella heidelberg (strain SL476).